The chain runs to 122 residues: Large ribosomal subunit protein uL14 (122 aa).

This sequence belongs to the universal ribosomal protein uL14 family. As to quaternary structure, part of the 50S ribosomal subunit. Forms a cluster with proteins L3 and L19. In the 70S ribosome, L14 and L19 interact and together make contacts with the 16S rRNA in bridges B5 and B8.

In terms of biological role, binds to 23S rRNA. Forms part of two intersubunit bridges in the 70S ribosome. This chain is Large ribosomal subunit protein uL14, found in Bartonella bacilliformis (strain ATCC 35685 / KC583 / Herrer 020/F12,63).